We begin with the raw amino-acid sequence, 262 residues long: MMEFILSHVEKGVMTLTLNRPERLNSFNDEMHAQLAECLKQVERDDTIRCLLLTGAGRGFCAGQDLNDRNVDPTGPAPDLGMSVERFYNPLVRRLAKLPKPVICAVNGVAAGAGATLALGGDIVIAARSAKFVMAFSKLGLIPDCGGTWLLPRVAGRARAMGLALLGNQLSAEQAHEWGMIWQVVDDETLADTAQQLARHLATQPTFGLGLIKQAINSAETNTLDTQLDLERDYQRLAGRSADYREGVSAFLAKRSPQFTGK.

This sequence belongs to the enoyl-CoA hydratase/isomerase family.

It catalyses the reaction 2-(1,2-epoxy-1,2-dihydrophenyl)acetyl-CoA = 2-oxepin-2(3H)-ylideneacetyl-CoA. It participates in aromatic compound metabolism; phenylacetate degradation. Functionally, catalyzes the reversible conversion of the epoxide to 2-oxepin-2(3H)-ylideneacetyl-CoA (oxepin-CoA). In Escherichia coli (strain K12), this protein is 1,2-epoxyphenylacetyl-CoA isomerase (paaG).